We begin with the raw amino-acid sequence, 540 residues long: Beta-2-syntrophin (540 aa).

Residues 73–114 (LPNGGGAGDSLPGSPSRGLGPPSPPAPPRGPAGEAGASPPVR) are disordered. Over residues 81–92 (DSLPGSPSRGLG) the composition is skewed to low complexity. Positions 93 to 102 (PPSPPAPPRG) are enriched in pro residues. 8 positions are modified to phosphoserine: Ser-95, Ser-110, Ser-129, Ser-211, Ser-222, Ser-233, Ser-393, and Ser-395. Residues 103 to 112 (PAGEAGASPP) are compositionally biased toward low complexity. In terms of domain architecture, PDZ spans 115-198 (RVRVVKQEAG…EVLLEVKFIR (84 aa)). 2 PH domains span residues 163–300 (ILSV…TNIM) and 325–437 (EVKH…QGCH). The tract at residues 220–240 (PQSPSFSGSEDSGSPKHQNST) is disordered. A compositionally biased stretch (low complexity) spans 222–231 (SPSFSGSEDS). Positions 484 to 540 (PFERLKMSADDGIRNLYLDFGGPEGELTMDLHSCPKPIVFVLHTFLSAKVTRMGLLV) constitute an SU domain. The tract at residues 518 to 540 (PKPIVFVLHTFLSAKVTRMGLLV) is calmodulin-binding.

Belongs to the syntrophin family. In terms of assembly, monomer and homodimer. Interacts with the other members of the syntrophin family: SNTA1 and SNTB1; and with the sodium channel proteins SCN4A and SCN5A. Interacts with SAST, MAST205, microtubules and microtubule-associated proteins. Interacts with the dystrophin protein DMD and related proteins DTNA and UTRN, and with the neuroregulin receptor ERBB4. Interacts with PTPRN when phosphorylated, protecting PTPRN from protein cleavage by CAPN1. Dephosphorylation upon insulin stimulation disrupts the interaction with PTPRN and results in the cleavage of PTPRN. Interacts with DTNB. Post-translationally, phosphorylated. Partially dephosphorylated upon insulin stimulation. In terms of tissue distribution, ubiquitous. Isoform 1 is the predominant isoform. Weak level of isoform 2 is present in all tested tissues, except in liver and heart where it is highly expressed.

The protein localises to the membrane. It localises to the cytoplasmic vesicle. Its subcellular location is the secretory vesicle membrane. It is found in the cell junction. The protein resides in the cytoplasm. The protein localises to the cytoskeleton. Functionally, adapter protein that binds to and probably organizes the subcellular localization of a variety of membrane proteins. May link various receptors to the actin cytoskeleton and the dystrophin glycoprotein complex. May play a role in the regulation of secretory granules via its interaction with PTPRN. The polypeptide is Beta-2-syntrophin (SNTB2) (Homo sapiens (Human)).